Reading from the N-terminus, the 209-residue chain is Lysine-rich arabinogalactan protein 18 (209 aa).

Residues 1–21 (MDRNFLLTVTLICIVVAGVGG) form the signal peptide. A disordered region spans residues 21-185 (GQSPISSPTK…PSADDQSGAA (165 aa)). Residues 23–79 (SPISSPTKSPTTPSAPTTSPTKSPAVTSPTTAPAKTPTASASSPVESPKSPAPVSES) are compositionally biased toward low complexity. 2 stretches are compositionally biased toward pro residues: residues 80–95 (SPPPTPVPESSPPVPA) and 103–119 (SSPPVPAPVADSPPAPV). The span at 132-145 (SKHKKTTKKSKKHQ) shows a compositional bias: basic residues. Over residues 149–164 (APAPELLGPPAPPTES) the composition is skewed to pro residues. Glycine 183 carries the GPI-anchor amidated glycine lipid modification. Residues 184–209 (AASTRVLRNVAVGAVATAWAVLVMAF) constitute a propeptide, removed in mature form.

This sequence belongs to the lysine-rich AGP family. Post-translationally, O-glycosylated on the hydroxyproline residues. In terms of tissue distribution, predominantly expressed in flowers, and moderately expressed in roots, stems and young leaves.

Its subcellular location is the cell membrane. Functionally, proteoglycan that seems to be implicated in diverse developmental roles such as differentiation, cell-cell recognition, embryogenesis and programmed cell death. This is Lysine-rich arabinogalactan protein 18 (AGP18) from Arabidopsis thaliana (Mouse-ear cress).